The primary structure comprises 371 residues: Choline kinase B1 (371 aa).

It belongs to the choline/ethanolamine kinase family. The cofactor is Mg(2+).

It carries out the reaction choline + ATP = phosphocholine + ADP + H(+). The polypeptide is Choline kinase B1 (ckb-1) (Caenorhabditis elegans).